Reading from the N-terminus, the 266-residue chain is DNA primase (266 aa).

A disordered region spans residues 244 to 266 (VTTTTTPSPPKIGSMQTTTKSTT). Residues 257–266 (SMQTTTKSTT) are compositionally biased toward polar residues.

It belongs to the baculoviridae LEF-1 family. In terms of assembly, interacts with LEF-2.

Plays an essential role in viral DNA replication. May generates single-stranded DNA for both leading and lagging strand synthesis. The primase initiates primer synthesis and thereby produces large amount of short RNA primers on the lagging strand that the polymerase elongates using dNTPs. This chain is DNA primase (LEF-1), found in Autographa californica nuclear polyhedrosis virus (AcMNPV).